The primary structure comprises 969 residues: GATOR2 complex protein Wdr59 (969 aa).

A disordered region spans residues 1-24 (MPPTETLRPGERGTAGGPGAGAPE). WD repeat units follow at residues 127 to 167 (GHTR…KPAL), 172 to 211 (VCMS…CPTH), 215 to 255 (AHLN…RAEK), 258 to 303 (TTMS…DPIC), and 307 to 351 (GHTD…LKLC). Position 373 is a phosphothreonine (threonine 373). One can recognise an RWD domain in the interval 435–538 (HEFSLLNTNM…RALVAAMKKK (104 aa)). Residues 891–911 (ECRKCAKPKRTPKCEPCKRPV) form a C4-type zinc finger. Zn(2+) is bound by residues cysteine 892, cysteine 895, cysteine 904, cysteine 907, cysteine 917, cysteine 928, histidine 933, histidine 936, histidine 939, cysteine 950, cysteine 953, cysteine 955, and cysteine 957. The RING-type; atypical zinc-finger motif lies at 912–960 (LFCVLCRLPVKGAANACLACGHGGHIDHMMQWFEKHNVCATCGCKCLER).

The protein belongs to the WD repeat WDR59 family. Component of the GATOR complex consisting of mio, Nup44A/Seh1, Im11, Nplr3, Nplr2, Wdr24, Wdr59 and Sec13. Within the GATOR complex, probable component of the GATOR2 subcomplex which is likely composed of mio, Nup44A/Seh1, Wdr24, Wdr59 and Sec13. The GATOR2 complex associates with unmet in the absence of S-adenosyl-L-methionine; the mio-Wdr24-Nup44A subcomplex is essential and sufficient for this interaction while Wdr59 and Sec13 are dispensable. This association acts as a nutrient sensor to inhibit mTORC1 signaling in the absence of methionine.

Its subcellular location is the lysosome membrane. In terms of biological role, a component of the GATOR complex, which functions as a regulator of the amino acid-sensing branch of the mTORC1 signaling pathway. The two GATOR subcomplexes, GATOR1 and GATOR2, regulate the mTORC1 pathway in order to mediate metabolic homeostasis, female gametogenesis and the response to amino acid limitation and complete starvation. GATOR2 activates the mTORC1 signaling pathway through the inhibition of the GATOR1 subcomplex, controlling the switch to cell proliferation and growth under nutrient replete conditions and during female oocyte development. Acts as an atypical component of the GATOR2 subcomplex, which can either promote or inhibit mTORC1 signaling, depending on tissues: inhibits mTORC1 activity by preventing the activity of GATOR2 in the ovary and the eye imaginal disk brain, while it promotes mTORC1 activity in the fat body. In Drosophila melanogaster (Fruit fly), this protein is GATOR2 complex protein Wdr59.